Reading from the N-terminus, the 120-residue chain is Ribosome-binding factor A (120 aa).

This sequence belongs to the RbfA family. In terms of assembly, monomer. Binds 30S ribosomal subunits, but not 50S ribosomal subunits or 70S ribosomes.

The protein resides in the cytoplasm. In terms of biological role, one of several proteins that assist in the late maturation steps of the functional core of the 30S ribosomal subunit. Associates with free 30S ribosomal subunits (but not with 30S subunits that are part of 70S ribosomes or polysomes). Required for efficient processing of 16S rRNA. May interact with the 5'-terminal helix region of 16S rRNA. This Buchnera aphidicola subsp. Acyrthosiphon pisum (strain 5A) protein is Ribosome-binding factor A.